The chain runs to 223 residues: UPF0441 protein YgiB (223 aa).

Low complexity predominate over residues 178 to 195 (TVPKTAMAPKPATTTTVT). The tract at residues 178-223 (TVPKTAMAPKPATTTTVTRGGFGESVAKQSTMQRSAAGTSTRSMGG) is disordered. The span at 204–223 (AKQSTMQRSAAGTSTRSMGG) shows a compositional bias: polar residues.

The protein belongs to the UPF0441 family.

The polypeptide is UPF0441 protein YgiB (Salmonella heidelberg (strain SL476)).